A 212-amino-acid polypeptide reads, in one-letter code: Abscisic acid receptor PYL10 (212 aa).

Positions 34–191 (YAVGPGQCSS…NLQKLKSVSE (158 aa)) are START-like. Abscisate contacts are provided by residues Lys70, 107–112 (ASTSTE), 134–140 (RLRNYRS), and Glu156. Positions 103–107 (SGLPA) match the Gate loop motif. The short motif at 133–135 (HRL) is the Latch loop element.

Belongs to the PYR/PYL/RCAR abscisic acid intracellular receptor family. As to quaternary structure, homodimer. Interacts with PP2C53. Binding to PP2C53 is dependent on the presence of abscisic acid (ABA). Interacts with PP2C50. Binding to PP2C50 is dependent on the presence of ABA.

The protein localises to the cytoplasm. Its subcellular location is the cytosol. It localises to the nucleus. Its function is as follows. Inhibits the protein phosphatases PP2C06 and PP2C09 when activated by abscisic acid (ABA). Together with PP2C53, SAPK8 and SAPK10, may form an ABA signaling module involved in stress response. The chain is Abscisic acid receptor PYL10 from Oryza sativa subsp. japonica (Rice).